We begin with the raw amino-acid sequence, 424 residues long: Ancylostoma secreted protein (424 aa).

A signal peptide spans 1–18 (MFSPVIVSVIFTIAFCDA). 2 SCP domains span residues 41–177 (LDFH…SCIY) and 242–387 (LSVH…VCQY).

The protein belongs to the CRISP family.

It localises to the secreted. Functionally, associated with the transition to parasitism by infective hookworm larvae. The sequence is that of Ancylostoma secreted protein (ASP) from Ancylostoma caninum (Dog hookworm).